The following is a 72-amino-acid chain: Translation initiation factor IF-1 (72 aa).

The S1-like domain maps to methionine 1–lysine 72.

The protein belongs to the IF-1 family. As to quaternary structure, component of the 30S ribosomal translation pre-initiation complex which assembles on the 30S ribosome in the order IF-2 and IF-3, IF-1 and N-formylmethionyl-tRNA(fMet); mRNA recruitment can occur at any time during PIC assembly.

Its subcellular location is the cytoplasm. One of the essential components for the initiation of protein synthesis. Stabilizes the binding of IF-2 and IF-3 on the 30S subunit to which N-formylmethionyl-tRNA(fMet) subsequently binds. Helps modulate mRNA selection, yielding the 30S pre-initiation complex (PIC). Upon addition of the 50S ribosomal subunit IF-1, IF-2 and IF-3 are released leaving the mature 70S translation initiation complex. This is Translation initiation factor IF-1 from Clostridioides difficile (strain 630) (Peptoclostridium difficile).